The chain runs to 318 residues: Large ribosomal subunit protein uL10 (318 aa).

Y24 is modified (phosphotyrosine). T59 carries the post-translational modification Phosphothreonine. K264 participates in a covalent cross-link: Glycyl lysine isopeptide (Lys-Gly) (interchain with G-Cter in ubiquitin). The disordered stretch occupies residues T293–D318. Residue K298 forms a Glycyl lysine isopeptide (Lys-Gly) (interchain with G-Cter in SUMO1); alternate linkage. K298 is covalently cross-linked (Glycyl lysine isopeptide (Lys-Gly) (interchain with G-Cter in SUMO2); alternate). Residues E303–M312 are compositionally biased toward acidic residues. Phosphoserine is present on residues S305 and S308.

Belongs to the universal ribosomal protein uL10 family. P0 forms a pentameric complex by interaction with dimers of P1 and P2. Identified in a IGF2BP1-dependent mRNP granule complex containing untranslated mRNAs. Interacts with APEX1. Interacts with FMR1. Post-translationally, ubiquitinated at Lys-264 by RNF14 and RNF25 in response to ribosome collisions (ribosome stalling).

The protein localises to the nucleus. Its subcellular location is the cytoplasm. In terms of biological role, ribosomal protein P0 is the functional equivalent of E.coli protein L10. In Bos taurus (Bovine), this protein is Large ribosomal subunit protein uL10 (RPLP0).